The chain runs to 104 residues: Vegetative-specific protein H7 (104 aa).

One can recognise an HTH cro/C1-type domain in the interval 43 to 97; sequence IQRARNALKMTQKELAFKINERPGVINEYESGSAIPSQAVLSKLEKALNVKLRGK. The segment at residues 54-73 is a DNA-binding region (H-T-H motif); sequence QKELAFKINERPGVINEYES.

This Dictyostelium discoideum (Social amoeba) protein is Vegetative-specific protein H7 (cinD-1).